A 1377-amino-acid chain; its full sequence is Zinc finger MYM-type protein 2 (1377 aa).

Glycyl lysine isopeptide (Lys-Gly) (interchain with G-Cter in SUMO2) cross-links involve residues Lys-48, Lys-88, Lys-98, and Lys-104. Composition is skewed to polar residues over residues 85–115 (TSSK…SVSE) and 127–138 (TNQGQEKNSSNF). The segment at 85 to 177 (TSSKNEELQG…GMGNSGITTE (93 aa)) is disordered. Basic and acidic residues predominate over residues 139–152 (IERRPPETKNRTND). Residue Lys-147 forms a Glycyl lysine isopeptide (Lys-Gly) (interchain with G-Cter in SUMO2) linkage. Positions 153–164 (VDFSTSSFSRSK) are enriched in polar residues. Ser-159 is modified (phosphoserine). Glycyl lysine isopeptide (Lys-Gly) (interchain with G-Cter in SUMO2) cross-links involve residues Lys-253 and Lys-297. The disordered stretch occupies residues 273–305 (NGESATHHNPDSWISQSASFPRNQKQPGVDSLS). Over residues 284-298 (SWISQSASFPRNQKQ) the composition is skewed to polar residues. Ser-305 bears the Phosphoserine mark. Glycyl lysine isopeptide (Lys-Gly) (interchain with G-Cter in SUMO2) cross-links involve residues Lys-312, Lys-325, Lys-348, and Lys-366. Residues 327 to 363 (VKVTCANCKKPLQKGQTAYQRKGSAHLFCSTTCLSSF) form an MYM-type 1 zinc finger. An MYM-type 2 zinc finger spans residues 369–409 (PKKLCVMCKKDITTMKGTIVAQVDSSESFQEFCSTSCLSLY). Glycyl lysine isopeptide (Lys-Gly) (interchain with G-Cter in SUMO2) cross-links involve residues Lys-417, Lys-441, Lys-491, Lys-503, Lys-513, Lys-529, and Lys-532. 2 MYM-type zinc fingers span residues 421 to 456 (NKSR…FNRY) and 463 to 502 (IMNC…VSEY). Residues 533-570 (LTTCTGCRTQCRFFDMTQCIGPNGYMEPYCSTACMNSH) form an MYM-type 5 zinc finger. Residues Lys-576, Lys-603, Lys-649, Lys-658, Lys-688, Lys-700, and Lys-709 each participate in a glycyl lysine isopeptide (Lys-Gly) (interchain with G-Cter in SUMO2) cross-link. An MYM-type 6 zinc finger spans residues 636-671 (QLKCNYCKNSFCSKPEILEWENKVHQFCSKTCSDDY). MYM-type zinc fingers lie at residues 723–758 (RCVT…CKKF) and 764–799 (KAAR…LLRF). Residues Lys-764, Lys-788, Lys-812, and Lys-829 each participate in a glycyl lysine isopeptide (Lys-Gly) (interchain with G-Cter in SUMO2) cross-link. 2 positions are modified to phosphoserine: Ser-838 and Ser-958. Disordered regions lie at residues 983 to 1002 (LLKN…PYEP) and 1028 to 1064 (VFGE…SDNS). Basic residues predominate over residues 1039 to 1050 (PRSKKKGAKRKA). Ser-1064 carries the phosphoserine modification. A Phosphothreonine modification is found at Thr-1376.

Can form homodimers. May be a component of a BHC histone deacetylase complex that contains HDAC1, HDAC2, HMG20B/BRAF35, KDM1A, RCOR1/CoREST, PHF21A/BHC80, ZMYM2, ZNF217, ZMYM3, GSE1 and GTF2I. Interacts with FOXP1 and FOXP2.

The protein localises to the nucleus. Functionally, involved in the negative regulation of transcription. The chain is Zinc finger MYM-type protein 2 (ZMYM2) from Homo sapiens (Human).